Here is a 300-residue protein sequence, read N- to C-terminus: Platelet-derived growth factor D (300 aa).

Residues Gln-1–Val-114 form the CUB domain. Cys-53 and Cys-75 are disulfide-bonded. Asn-220 carries an N-linked (GlcNAc...) asparagine glycan.

The protein belongs to the PDGF/VEGF growth factor family. Homodimer; disulfide-linked. Interacts with PDGFRB homodimers, and with heterodimers formed by PDGFRA and PDGFRB. Activated by proteolytic cleavage. Proteolytic removal of the N-terminal CUB domain releasing the core domain is necessary for unmasking the receptor-binding epitopes of the core domain. Cleavage after Arg-191 or Arg-193 by urokinase plasminogen activator gives rise to the active form.

The protein resides in the secreted. Functionally, growth factor that plays an essential role in the regulation of embryonic development, cell proliferation, cell migration, survival and chemotaxis. Potent mitogen for cells of mesenchymal origin. Plays an important role in wound healing. Induces macrophage recruitment, increased interstitial pressure, and blood vessel maturation during angiogenesis. Can initiate events that lead to a mesangial proliferative glomerulonephritis, including influx of monocytes and macrophages and production of extracellular matrix. In Oryctolagus cuniculus (Rabbit), this protein is Platelet-derived growth factor D (PDGFD).